A 164-amino-acid polypeptide reads, in one-letter code: Microfibrillar-associated protein 5 (164 aa).

The N-terminal stretch at 1 to 28 (MLFLGQKALLLVLAISIPSDWLPLGVSG) is a signal peptide. The Cell attachment site signature appears at 30–32 (RGD). N-linked (GlcNAc...) asparagine glycosylation occurs at asparagine 70.

Belongs to the MFAP family. In terms of assembly, interacts with TGFB2. Interacts with BMP2. Interacts with FBN1 (via N-terminal domain) and FBN2. Post-translationally, forms intermolecular disulfide bonds either with other MAGP-2 molecules or with other components of the microfibrils.

The protein resides in the secreted. Its subcellular location is the extracellular space. It localises to the extracellular matrix. Functionally, may play a role in hematopoiesis. In the cardiovascular system, could regulate growth factors or participate in cell signaling in maintaining large vessel integrity. Component of the elastin-associated microfibrils. This chain is Microfibrillar-associated protein 5 (Mfap5), found in Mus musculus (Mouse).